The chain runs to 623 residues: Hemagglutinin component HA-70 type D (623 aa).

In terms of assembly, botulinum toxins are produced as large progenitor toxins of 12S (M toxin, about 280 kDa) and 16S (L toxin, about 650 kDa). M toxin consists of a non-toxic, non-hemagglutinin component (NTNHA) and the neurotoxin (BoNT/D). L toxin consists of the M toxin and the 3 hemagglutinin (HA) subcomponents of 70, 33, and 17 kDa. The stoichiometry of the whole complex has been modeled as one BoNT/D, one NTNHA, three HA-70, six HA-33 and three HA-17. HA-33 and HA-17 crystallize as a heterotrimer with two HA-33 and one HA-17. Post-translationally, limited treatment of L toxin with pepsin or trypsin produces shorter HA-70 proteins (called HA-55, HA-23 and HA-22) sometimes observed in vivo in other strains of type C and D botulinum toxin preparations.

Its subcellular location is the secreted. Its function is as follows. The hemagglutinin (HA) component of the progenitor toxin protects the structural integrity of the neurotoxin; may increase internalization of the neurotoxin into the bloodstream of the host. Involved in binding to the small intestine through interactions with glycolipids and glycoproteins containing sialic acid moieties. Erythrocyte agglutination only occurs when the entire complex is assembled. This HA subunit probably connects toxin/NTNHA to HA-33 and HA-17, the other components of the HA complex, and it may also protect the M toxin from proteolysis upon secretion. The polypeptide is Hemagglutinin component HA-70 type D (Clostridium botulinum D phage (Clostridium botulinum D bacteriophage)).